The primary structure comprises 37 residues: Photosystem I reaction center subunit IX (37 aa).

Residues phenylalanine 4–isoleucine 24 form a helical membrane-spanning segment.

This sequence belongs to the PsaJ family.

The protein localises to the cellular thylakoid membrane. Functionally, may help in the organization of the PsaE and PsaF subunits. The chain is Photosystem I reaction center subunit IX from Synechococcus sp. (strain WH7803).